Here is a 462-residue protein sequence, read N- to C-terminus: Glycogen synthase 1 (462 aa).

Arginine 6 is a binding site for ADP-alpha-D-glucose.

Belongs to the glycosyltransferase 1 family. Bacterial/plant glycogen synthase subfamily.

It catalyses the reaction [(1-&gt;4)-alpha-D-glucosyl](n) + ADP-alpha-D-glucose = [(1-&gt;4)-alpha-D-glucosyl](n+1) + ADP + H(+). Its pathway is glycan biosynthesis; glycogen biosynthesis. Synthesizes alpha-1,4-glucan chains using ADP-glucose. The chain is Glycogen synthase 1 from Bradyrhizobium diazoefficiens (strain JCM 10833 / BCRC 13528 / IAM 13628 / NBRC 14792 / USDA 110).